A 335-amino-acid chain; its full sequence is Glycerol-3-phosphate dehydrogenase [NAD(P)+] (335 aa).

NADPH contacts are provided by S10, F11, R31, and K105. Residues K105, G136, and S138 each coordinate sn-glycerol 3-phosphate. NADPH is bound at residue A140. Positions 191, 244, 254, 255, and 256 each coordinate sn-glycerol 3-phosphate. K191 acts as the Proton acceptor in catalysis. R255 serves as a coordination point for NADPH. The NADPH site is built by V279 and E281.

This sequence belongs to the NAD-dependent glycerol-3-phosphate dehydrogenase family.

The protein localises to the cytoplasm. It carries out the reaction sn-glycerol 3-phosphate + NAD(+) = dihydroxyacetone phosphate + NADH + H(+). It catalyses the reaction sn-glycerol 3-phosphate + NADP(+) = dihydroxyacetone phosphate + NADPH + H(+). Its pathway is membrane lipid metabolism; glycerophospholipid metabolism. In terms of biological role, catalyzes the reduction of the glycolytic intermediate dihydroxyacetone phosphate (DHAP) to sn-glycerol 3-phosphate (G3P), the key precursor for phospholipid synthesis. The chain is Glycerol-3-phosphate dehydrogenase [NAD(P)+] from Leptospira borgpetersenii serovar Hardjo-bovis (strain L550).